The sequence spans 866 residues: DNA mismatch repair protein MutS (866 aa).

An ATP-binding site is contributed by 618–625; that stretch reads GPNMSGKS.

The protein belongs to the DNA mismatch repair MutS family.

Its function is as follows. This protein is involved in the repair of mismatches in DNA. It is possible that it carries out the mismatch recognition step. This protein has a weak ATPase activity. The protein is DNA mismatch repair protein MutS of Flavobacterium psychrophilum (strain ATCC 49511 / DSM 21280 / CIP 103535 / JIP02/86).